Here is a 365-residue protein sequence, read N- to C-terminus: Probable caffeine synthase 4 (365 aa).

Tyr18 provides a ligand contact to S-adenosyl-L-homocysteine. Thr25 contributes to the caffeine binding site. Cys61, Asn66, Asp98, Leu99, Ser134, and Phe135 together coordinate S-adenosyl-L-homocysteine. Residues Tyr152, His155, and Trp156 each coordinate caffeine. The Mg(2+) site is built by Asn173, Asp259, Phe261, and Asn262. Phe317 provides a ligand contact to caffeine.

This sequence belongs to the methyltransferase superfamily. Type-7 methyltransferase family. The cofactor is Mg(2+).

Its pathway is alkaloid biosynthesis. May be involved in the biosynthesis of caffeine. The chain is Probable caffeine synthase 4 from Camellia sinensis (Tea plant).